The primary structure comprises 613 residues: Dihydroxy-acid dehydratase 3 (613 aa).

D81 serves as a coordination point for Mg(2+). C122 contributes to the [2Fe-2S] cluster binding site. Mg(2+)-binding residues include D123 and K124. K124 carries the N6-carboxylysine modification. [2Fe-2S] cluster is bound at residue C197. E493 contacts Mg(2+). Catalysis depends on S519, which acts as the Proton acceptor.

This sequence belongs to the IlvD/Edd family. In terms of assembly, homodimer. Requires [2Fe-2S] cluster as cofactor. Mg(2+) is required as a cofactor.

It carries out the reaction (2R)-2,3-dihydroxy-3-methylbutanoate = 3-methyl-2-oxobutanoate + H2O. It catalyses the reaction (2R,3R)-2,3-dihydroxy-3-methylpentanoate = (S)-3-methyl-2-oxopentanoate + H2O. It participates in amino-acid biosynthesis; L-isoleucine biosynthesis; L-isoleucine from 2-oxobutanoate: step 3/4. It functions in the pathway amino-acid biosynthesis; L-valine biosynthesis; L-valine from pyruvate: step 3/4. In terms of biological role, functions in the biosynthesis of branched-chain amino acids. Catalyzes the dehydration of (2R,3R)-2,3-dihydroxy-3-methylpentanoate (2,3-dihydroxy-3-methylvalerate) into 2-oxo-3-methylpentanoate (2-oxo-3-methylvalerate) and of (2R)-2,3-dihydroxy-3-methylbutanoate (2,3-dihydroxyisovalerate) into 2-oxo-3-methylbutanoate (2-oxoisovalerate), the penultimate precursor to L-isoleucine and L-valine, respectively. This Nocardia farcinica (strain IFM 10152) protein is Dihydroxy-acid dehydratase 3.